Consider the following 174-residue polypeptide: NADH-ubiquinone oxidoreductase chain 6 (174 aa).

A run of 4 helical transmembrane segments spans residues 25–45 (SMGLMLLIQTFLTCLITSIYV), 48–68 (FWFSYVLFLIFLGGMLILFIY), 82–102 (FSLTLISLIIFSIFTIVFFMI), and 143–163 (LITLLLINYLFLTLLVTVKIT).

It belongs to the complex I subunit 6 family.

The protein resides in the mitochondrion membrane. It carries out the reaction a ubiquinone + NADH + 5 H(+)(in) = a ubiquinol + NAD(+) + 4 H(+)(out). Its function is as follows. Core subunit of the mitochondrial membrane respiratory chain NADH dehydrogenase (Complex I) that is believed to belong to the minimal assembly required for catalysis. Complex I functions in the transfer of electrons from NADH to the respiratory chain. The immediate electron acceptor for the enzyme is believed to be ubiquinone. The protein is NADH-ubiquinone oxidoreductase chain 6 (ND6) of Anopheles albimanus (New world malaria mosquito).